The following is a 683-amino-acid chain: MRGCLQLARWLSAAPKGTAASLTRAPFVLANAPRYFTSSASRAGSRSTATKPLSDLEKRISAIPIERYRNFCIVAHVDHGKSTLSDRLLELTGTIEPGSNKQVLDKLDVERERGITVKAQTCSMIYNHNGEDYLLHLVDTPGHVDFRAEVSRSYASCGGALLLVDASQGIQAQTVANFYLAFAQGLELIPVINKVDLPSAEPERALEQMKNSFELDTENAVMVSAKTGLNVEKLLPTVIEKIPAYGHFPVDSHELLPLLTLSSPIGDCKKPLRMLLVDSWYDSYKGVICLVRIFDGEIRAGQQVVSFATGLKYYVGEVGIMYPNETPQSVLRAGQVGYIYFNPGMKRSKEAKIGDTFTRVGFEKAVEPLPGFEEPKAMVFVAAYPVDADHFEHLEDSINQLVLNDRSITVQKESSEALGAGFRLGFLGTLHCSVFEDRLRQEHGASIIITPPSVPVKIIWKDGKEEIITSPAKFPEDEELRSKVAEIQEPYVLATLTFPEEYLGKVIELCEANRGEQKSLEYFTPTQVILKYELPLAQLVDDFFGKLKGSTKGYASLDYEESAWQTGNIVKLQLLVNKAPVDAVARIVHSSQVERLGRQWVTKFKEHVDRQLFEVVIQAAVGKKIIARETVKPYRKDVLAKLHASDVSRRRKLLEKQKEGRKRLRAVGNVVIEHKAFQAFLAK.

The N-terminal 43 residues, 1–43, are a transit peptide targeting the mitochondrion; sequence MRGCLQLARWLSAAPKGTAASLTRAPFVLANAPRYFTSSASRA. The tr-type G domain maps to 66-250; the sequence is ERYRNFCIVA…KIPAYGHFPV (185 aa). GTP is bound by residues 75–82, 139–143, and 193–196; these read AHVDHGKS, DTPGH, and NKVD.

This sequence belongs to the TRAFAC class translation factor GTPase superfamily. Classic translation factor GTPase family. LepA subfamily.

Its subcellular location is the mitochondrion inner membrane. The enzyme catalyses GTP + H2O = GDP + phosphate + H(+). Promotes mitochondrial protein synthesis. May act as a fidelity factor of the translation reaction, by catalyzing a one-codon backward translocation of tRNAs on improperly translocated ribosomes. Binds to mitochondrial ribosomes in a GTP-dependent manner. The polypeptide is Translation factor guf1, mitochondrial (guf1) (Aspergillus fumigatus (strain ATCC MYA-4609 / CBS 101355 / FGSC A1100 / Af293) (Neosartorya fumigata)).